The following is a 206-amino-acid chain: Small ribosomal subunit protein uS4c (206 aa).

Residues 94–152 (MRLDNIVFRLGMAPTIPAARQLVNHRHILVNDFTVNIPSYSCKLGDKISVQKRFESKTN) form the S4 RNA-binding domain.

It belongs to the universal ribosomal protein uS4 family. Part of the 30S ribosomal subunit. Contacts protein S5. The interaction surface between S4 and S5 is involved in control of translational fidelity.

It is found in the plastid. Its subcellular location is the chloroplast. Its function is as follows. One of the primary rRNA binding proteins, it binds directly to 16S rRNA where it nucleates assembly of the body of the 30S subunit. Functionally, with S5 and S12 plays an important role in translational accuracy. The chain is Small ribosomal subunit protein uS4c (rps4) from Chara vulgaris (Common stonewort).